A 124-amino-acid chain; its full sequence is Histone H2A (124 aa).

Residues 1-18 show a composition bias toward basic residues; it reads MSGRGKGGKAKGKSKTRS. The tract at residues 1–23 is disordered; the sequence is MSGRGKGGKAKGKSKTRSSRAGL. S2 carries the N-acetylserine modification. Position 2 is a phosphoserine (S2). Q104 bears the N5-methylglutamine mark.

The protein belongs to the histone H2A family. In terms of assembly, the nucleosome is a histone octamer containing two molecules each of H2A, H2B, H3 and H4 assembled in one H3-H4 heterotetramer and two H2A-H2B heterodimers. The octamer wraps approximately 147 bp of DNA. In terms of processing, phosphorylation of Ser-2 directly represses transcription.

The protein resides in the nucleus. It localises to the chromosome. Core component of nucleosome. Nucleosomes wrap and compact DNA into chromatin, limiting DNA accessibility to the cellular machineries which require DNA as a template. Histones thereby play a central role in transcription regulation, DNA repair, DNA replication and chromosomal stability. DNA accessibility is regulated via a complex set of post-translational modifications of histones, also called histone code, and nucleosome remodeling. The sequence is that of Histone H2A from Platynereis dumerilii (Dumeril's clam worm).